Here is a 1150-residue protein sequence, read N- to C-terminus: Alpha-mannosidase 2 (1150 aa).

Over M1–R5 the chain is Cytoplasmic. Residues Q6–L26 traverse the membrane as a helical; Signal-anchor for type II membrane protein segment. The Lumenal portion of the chain corresponds to D27–T1150. N78 carries an N-linked (GlcNAc...) asparagine glycan. S80 and S82 each carry phosphoserine. A glycan (N-linked (GlcNAc...) asparagine) is linked at N93. Residues H174, D176, D288, and H568 each coordinate Zn(2+). The active-site Nucleophile is D288. Residue N1129 is glycosylated (N-linked (GlcNAc...) asparagine).

It belongs to the glycosyl hydrolase 38 family. Homodimer; disulfide-linked. It depends on Zn(2+) as a cofactor. In terms of processing, glycosylated. All tissues, mostly in adrenal and thymus.

It localises to the golgi apparatus membrane. The catalysed reaction is N(4)-{beta-D-GlcNAc-(1-&gt;2)-alpha-D-Man-(1-&gt;3)-[alpha-D-Man-(1-&gt;3)-[alpha-D-Man-(1-&gt;6)]-alpha-D-Man-(1-&gt;6)]-beta-D-Man-(1-&gt;4)-beta-D-GlcNAc-(1-&gt;4)-beta-D-GlcNAc}-L-asparaginyl-[protein] + 2 H2O = 2 alpha-D-mannopyranose + an N(4)-{beta-D-GlcNAc-(1-&gt;2)-alpha-D-Man-(1-&gt;3)-[alpha-D-Man-(1-&gt;6)]-beta-D-Man-(1-&gt;4)-beta-D-GlcNAc-(1-&gt;4)-beta-D-GlcNAc}-L-asparaginyl-[protein]. Its pathway is protein modification; protein glycosylation. Its function is as follows. Catalyzes the first committed step in the biosynthesis of complex N-glycans. It controls conversion of high mannose to complex N-glycans; the final hydrolytic step in the N-glycan maturation pathway. The chain is Alpha-mannosidase 2 (Man2a1) from Mus musculus (Mouse).